Here is a 100-residue protein sequence, read N- to C-terminus: Urease subunit gamma (100 aa).

This sequence belongs to the urease gamma subunit family. Heterotrimer of UreA (gamma), UreB (beta) and UreC (alpha) subunits. Three heterotrimers associate to form the active enzyme.

It is found in the cytoplasm. It catalyses the reaction urea + 2 H2O + H(+) = hydrogencarbonate + 2 NH4(+). The protein operates within nitrogen metabolism; urea degradation; CO(2) and NH(3) from urea (urease route): step 1/1. This is Urease subunit gamma from Laribacter hongkongensis (strain HLHK9).